We begin with the raw amino-acid sequence, 188 residues long: MTEYKLVVVGAGGVGKSALTIQLIQNHFVDEYDPTIEDSYRKQVVIDGETCLLDILDTAGQEEYSAMRDQYMRTGEGFLCVFAINNTKSFEDIHHYREQIKRVKDSEDVPMVLVGNKYDLPTRTVDTKQAQDLARSYGIPFIETSAKTRQGVDDAFYTLVREIRKHKEKMSKEGKKKKKKSKTKCILM.

GTP-binding positions include 10 to 18 (GAGGVGKSA), 29 to 35 (VDEYDPT), 59 to 60 (AG), and 116 to 119 (NKYD). The Effector region signature appears at 32–40 (YDPTIEDSY). The tract at residues 167-188 (KEKMSKEGKKKKKKSKTKCILM) is disordered. Cysteine methyl ester is present on C185. The S-farnesyl cysteine moiety is linked to residue C185. Positions 186 to 188 (ILM) are cleaved as a propeptide — removed in mature form.

The protein belongs to the small GTPase superfamily. Ras family.

Its subcellular location is the cell membrane. The protein resides in the cytoplasm. It catalyses the reaction GTP + H2O = GDP + phosphate + H(+). With respect to regulation, alternates between an inactive form bound to GDP and an active form bound to GTP. Activated by a guanine nucleotide-exchange factor (GEF) and inactivated by a GTPase-activating protein (GAP). Ras proteins bind GDP/GTP and possess intrinsic GTPase activity. Plays an important role in the regulation of cell proliferation. May play a role in promoting oncogenic events by inducing transcriptional silencing of tumor suppressor genes (TSGs). This chain is GTPase KRas (kras), found in Kryptolebias marmoratus (Mangrove killifish).